The chain runs to 189 residues: UPF0301 protein PP_4995 (189 aa).

It belongs to the UPF0301 (AlgH) family.

The sequence is that of UPF0301 protein PP_4995 from Pseudomonas putida (strain ATCC 47054 / DSM 6125 / CFBP 8728 / NCIMB 11950 / KT2440).